Reading from the N-terminus, the 91-residue chain is UPF0250 protein NMA1380 (91 aa).

Belongs to the UPF0250 family.

The chain is UPF0250 protein NMA1380 from Neisseria meningitidis serogroup A / serotype 4A (strain DSM 15465 / Z2491).